Reading from the N-terminus, the 174-residue chain is Gamma-crystallin D (174 aa).

Beta/gamma crystallin 'Greek key' domains follow at residues 2 to 40 (GKIT…RVDS) and 41 to 83 (GCWM…RLIP). A connecting peptide region spans residues 84–87 (HAGS). 2 consecutive Beta/gamma crystallin 'Greek key' domains span residues 88–128 (HRLR…NVLE) and 129–171 (GSWV…RRVI).

It belongs to the beta/gamma-crystallin family.

In terms of biological role, crystallins are the dominant structural components of the vertebrate eye lens. This chain is Gamma-crystallin D (CRYGD), found in Bos taurus (Bovine).